We begin with the raw amino-acid sequence, 369 residues long: 3-dehydroquinate synthase (369 aa).

Residues 75–80 (DGEEHK), 109–113 (GVIGD), 133–134 (TT), K146, K155, and 173–176 (TLKT) each bind NAD(+). E188, H251, and H268 together coordinate Zn(2+).

The protein belongs to the sugar phosphate cyclases superfamily. Dehydroquinate synthase family. It depends on Co(2+) as a cofactor. The cofactor is Zn(2+). NAD(+) serves as cofactor.

The protein localises to the cytoplasm. It catalyses the reaction 7-phospho-2-dehydro-3-deoxy-D-arabino-heptonate = 3-dehydroquinate + phosphate. The protein operates within metabolic intermediate biosynthesis; chorismate biosynthesis; chorismate from D-erythrose 4-phosphate and phosphoenolpyruvate: step 2/7. Its function is as follows. Catalyzes the conversion of 3-deoxy-D-arabino-heptulosonate 7-phosphate (DAHP) to dehydroquinate (DHQ). The chain is 3-dehydroquinate synthase from Legionella pneumophila (strain Corby).